Consider the following 396-residue polypeptide: Elongation factor Tu (396 aa).

The tr-type G domain maps to 10 to 206 (KPHVNVGTIG…ALDSYIPDPE (197 aa)). The interval 19 to 26 (GHVDHGKT) is G1. Position 19–26 (19–26 (GHVDHGKT)) interacts with GTP. Residue Thr-26 coordinates Mg(2+). The interval 60 to 64 (GITIN) is G2. A G3 region spans residues 81-84 (DCPG). GTP contacts are provided by residues 81-85 (DCPGH) and 136-139 (NKCD). The segment at 136–139 (NKCD) is G4. The segment at 174 to 176 (SAL) is G5.

Belongs to the TRAFAC class translation factor GTPase superfamily. Classic translation factor GTPase family. EF-Tu/EF-1A subfamily. In terms of assembly, monomer.

The protein localises to the cytoplasm. It carries out the reaction GTP + H2O = GDP + phosphate + H(+). Functionally, GTP hydrolase that promotes the GTP-dependent binding of aminoacyl-tRNA to the A-site of ribosomes during protein biosynthesis. This is Elongation factor Tu from Dechloromonas aromatica (strain RCB).